Here is a 1197-residue protein sequence, read N- to C-terminus: SRC kinase signaling inhibitor 1 (1197 aa).

Residues Ala-19 to Arg-45 show a composition bias toward basic and acidic residues. Positions Ala-19 to Asn-80 are disordered. 2 positions are modified to phosphoserine: Ser-47 and Ser-52. Gly residues predominate over residues Leu-65 to Gly-75. Position 79 is a phosphoserine (Ser-79). Position 86 is a phosphothreonine (Thr-86). Ser-87, Ser-98, Ser-178, Ser-200, Ser-204, Ser-214, and Ser-260 each carry phosphoserine. At Tyr-276 the chain carries Phosphotyrosine. A disordered region spans residues Ala-319–Leu-415. The span at Arg-321–Asn-331 shows a compositional bias: polar residues. Residues Leu-332–Ser-341 show a composition bias toward low complexity. 3 positions are modified to phosphoserine: Ser-333, Ser-342, and Ser-359. The span at Pro-348 to Ser-366 shows a compositional bias: low complexity. Omega-N-methylarginine is present on residues Arg-364 and Arg-371. Phosphoserine occurs at positions 378, 397, and 399. Positions Pro-391–Pro-400 are enriched in polar residues. Over residues Leu-404–Leu-415 the composition is skewed to basic and acidic residues. A Phosphotyrosine modification is found at Tyr-431. Residues Gly-501 to Pro-676 are disordered. A compositionally biased stretch (pro residues) spans Gly-520–Gly-531. Residues Ser-527, Ser-530, and Ser-534 each carry the phosphoserine modification. Arg-535 carries the omega-N-methylarginine modification. Phosphoserine occurs at positions 537, 547, 549, 551, and 556. Residues Lys-595–Glu-607 show a composition bias toward basic and acidic residues. Phosphoserine is present on residues Ser-631 and Ser-655. Phosphothreonine occurs at positions 658 and 671. The interaction with SNAP25 stretch occupies residues Arg-681–Val-731. Coiled-coil stretches lie at residues Leu-688–Leu-708 and Glu-760–Asp-780. Phosphoserine occurs at positions 878 and 900. Disordered regions lie at residues Gly-891–Trp-949 and Asp-983–Ser-1065. Phosphothreonine is present on Thr-918. Ser-1021 is subject to Phosphoserine. Over residues Lys-1036–Arg-1045 the composition is skewed to pro residues. 2 positions are modified to phosphoserine: Ser-1077 and Ser-1094. Residues Ser-1141–Thr-1163 form a disordered region.

It belongs to the SRCIN1 family. Interacts with BCAR1/p130Cas through its C-terminal domain and with CSK, CTTN and SRC. Also interacts with MAPRE3/EB3, SORBS3/vinexin and the N-terminal coiled-coil region of SNAP25. Tyrosine-phosphorylated in response to EGF and to cell adhesion to integrin ligands. In terms of tissue distribution, expressed exclusively in brain. Abundant in telencephalon and expressed moderately in cerebellum, hypothalamus, thalamus, superior and inferior colliculi, and olfactory bulb. No expression detected in medulla oblongata, spinal cord or pituitary gland. Enriched in the neuropil rather than soma in the thalamus, corpus striatum and cerebral cortex. Detected in astrocytes.

It is found in the cytoplasm. The protein resides in the cytoskeleton. Its subcellular location is the cell projection. It localises to the axon. The protein localises to the dendrite. It is found in the presynapse. The protein resides in the postsynapse. Its subcellular location is the postsynaptic density. In terms of biological role, acts as a negative regulator of SRC by activating CSK which inhibits SRC activity and downstream signaling, leading to impaired cell spreading and migration. Regulates dendritic spine morphology. Involved in calcium-dependent exocytosis. May play a role in neurotransmitter release or synapse maintenance. The polypeptide is SRC kinase signaling inhibitor 1 (Rattus norvegicus (Rat)).